Consider the following 385-residue polypeptide: Lipid-A-disaccharide synthase (385 aa).

It belongs to the LpxB family.

It catalyses the reaction a lipid X + a UDP-2-N,3-O-bis[(3R)-3-hydroxyacyl]-alpha-D-glucosamine = a lipid A disaccharide + UDP + H(+). It functions in the pathway bacterial outer membrane biogenesis; LPS lipid A biosynthesis. Its function is as follows. Condensation of UDP-2,3-diacylglucosamine and 2,3-diacylglucosamine-1-phosphate to form lipid A disaccharide, a precursor of lipid A, a phosphorylated glycolipid that anchors the lipopolysaccharide to the outer membrane of the cell. In Pseudoalteromonas translucida (strain TAC 125), this protein is Lipid-A-disaccharide synthase.